The sequence spans 513 residues: 2-isopropylmalate synthase (513 aa).

The Pyruvate carboxyltransferase domain maps to 5–268; sequence LIIFDTTLRD…DIGVDTTQIV (264 aa). Mn(2+) contacts are provided by Asp-14, His-202, His-204, and Asn-239. A regulatory domain region spans residues 394-513; that stretch reads RFISLSQRSE…KAVQKINPQI (120 aa).

The protein belongs to the alpha-IPM synthase/homocitrate synthase family. LeuA type 1 subfamily. In terms of assembly, homodimer. The cofactor is Mn(2+).

It localises to the cytoplasm. The catalysed reaction is 3-methyl-2-oxobutanoate + acetyl-CoA + H2O = (2S)-2-isopropylmalate + CoA + H(+). It functions in the pathway amino-acid biosynthesis; L-leucine biosynthesis; L-leucine from 3-methyl-2-oxobutanoate: step 1/4. In terms of biological role, catalyzes the condensation of the acetyl group of acetyl-CoA with 3-methyl-2-oxobutanoate (2-ketoisovalerate) to form 3-carboxy-3-hydroxy-4-methylpentanoate (2-isopropylmalate). The polypeptide is 2-isopropylmalate synthase (Cupriavidus necator (strain ATCC 17699 / DSM 428 / KCTC 22496 / NCIMB 10442 / H16 / Stanier 337) (Ralstonia eutropha)).